A 459-amino-acid chain; its full sequence is Cysteine--tRNA ligase (459 aa).

Zn(2+) is bound at residue C28. The 'HIGH' region motif lies at 30–40 (VTVYDLCHFGH). Residues C209, H234, and E238 each contribute to the Zn(2+) site. The short motif at 266 to 270 (KMSKS) is the 'KMSKS' region element. Residue K269 coordinates ATP.

The protein belongs to the class-I aminoacyl-tRNA synthetase family. Monomer. Requires Zn(2+) as cofactor.

It is found in the cytoplasm. The enzyme catalyses tRNA(Cys) + L-cysteine + ATP = L-cysteinyl-tRNA(Cys) + AMP + diphosphate. The chain is Cysteine--tRNA ligase from Actinobacillus succinogenes (strain ATCC 55618 / DSM 22257 / CCUG 43843 / 130Z).